The sequence spans 588 residues: MMRTHYCGALNRNNIGQDVTLSGWVHRRRDLGGLIFIDMRDRDGIVQVCFDPKYQDALTAAAGLRNEFCIQIKGEVIARPENQINKNMATGEVEVLAKELRIYNASDVLPLDFNQNNTEEQRLKYRYLDLRRPEMAQRLKTRAKITSFVRRFMDDNGFLDIETPMLTKATPEGARDYLVPSRVHKGKFYALPQSPQLFKQLLMMSGFDRYYQIVKCFRDEDLRADRQPEFTQIDVETSFLTAPEVREIMERMVHDLWLDTIGVDLGKFPVMTWQEAMRRFGSDKPDLRNPLEMVDVADIVKDVEFKVFNEPANNPNGRVAVIRVPNGAEITRKQIDEYTQFVGIYGAKGLAWAKVNDINAGLEGVQSPIAKFLNEEVWKALAERVNAQTGDILFFGADKWQTTTDAMGALRLKLGCDLGLTRLDEWQPLWVIDFPMFERDEEGNLAAMHHPFTSPKDFSPEQLEADPTSAVANAYDMVINGYEVGGGSVRIFDPKMQQTVFRILGIDEEQQREKFGFLLDALKFGTPPHAGLAFGLDRLTMLLTGTENIRDVIAFPKTTAAACLMTEAPSFVNPQALEELAISVVKAE.

Glutamate 172 contributes to the L-aspartate binding site. The segment at 196–199 is aspartate; it reads QLFK. Arginine 218 contributes to the L-aspartate binding site. ATP is bound by residues 218–220 and glutamine 227; that span reads RDE. Histidine 449 is a binding site for L-aspartate. Glutamate 483 provides a ligand contact to ATP. Residue arginine 490 coordinates L-aspartate. 535–538 contributes to the ATP binding site; it reads GLDR.

Belongs to the class-II aminoacyl-tRNA synthetase family. Type 1 subfamily. In terms of assembly, homodimer.

Its subcellular location is the cytoplasm. The catalysed reaction is tRNA(Asp) + L-aspartate + ATP = L-aspartyl-tRNA(Asp) + AMP + diphosphate. Its function is as follows. Catalyzes the attachment of L-aspartate to tRNA(Asp) in a two-step reaction: L-aspartate is first activated by ATP to form Asp-AMP and then transferred to the acceptor end of tRNA(Asp). In Haemophilus influenzae (strain 86-028NP), this protein is Aspartate--tRNA ligase.